Consider the following 335-residue polypeptide: Cytoskeleton protein RodZ (335 aa).

Topologically, residues 1–111 are cytoplasmic; sequence MNTEATHDQN…LGKRRKKRDG (111 aa). One can recognise an HTH cro/C1-type domain in the interval 19–71; the sequence is LRNAREQLGLSQQAVAERLCLKVSTVRDIEEDKAPADLASTFLRGYIRSYARL. Positions 30–49 form a DNA-binding region, H-T-H motif; that stretch reads QQAVAERLCLKVSTVRDIEE. The helical; Signal-anchor for type II membrane protein transmembrane segment at 112 to 132 threads the bilayer; that stretch reads WLMTFTWLVLFVVIGLSGAWW. The Periplasmic segment spans residues 133-335; it reads WQDHKAQQEE…TLNAEQSPAQ (203 aa). Polar residues predominate over residues 148-164; that stretch reads DQSSAELNNNQSQSVPL. Residues 148–239 form a disordered region; the sequence is DQSSAELNNN…PDGAAPLPTD (92 aa). Composition is skewed to low complexity over residues 165-205 and 217-239; these read DTST…DPQQ and DTAATPAPAATTTPDGAAPLPTD.

Belongs to the RodZ family.

It localises to the cell inner membrane. In terms of biological role, cytoskeletal protein that is involved in cell-shape control through regulation of the length of the long axis. The sequence is that of Cytoskeleton protein RodZ from Escherichia coli O6:K15:H31 (strain 536 / UPEC).